A 1481-amino-acid chain; its full sequence is Cystic fibrosis transmembrane conductance regulator (1481 aa).

Topologically, residues 1–77 are cytoplasmic; sequence MQKSPLVKAS…KLINALRRCF (77 aa). Residues 78–98 traverse the membrane as a helical segment; sequence LWRFIFYGILLYLGEVTKAVQ. The 285-residue stretch at 81 to 365 folds into the ABC transmembrane type-1 1 domain; the sequence is FIFYGILLYL…GAVQTWYDSL (285 aa). The Extracellular segment spans residues 99–122; sequence PLLLGRIIASYDPDNKEERSIAIY. The helical transmembrane segment at 123 to 146 threads the bilayer; that stretch reads LAIGLCLLFIVRTLLLHPAIFGLQ. The Cytoplasmic portion of the chain corresponds to 147–195; that stretch reads HIGMQMRIAMFSLIYKKTLKLSSRVLDKISIGQLVSLLSNNLNKFDEGL. A helical membrane pass occupies residues 196–216; the sequence is ALAHFVWIAPLQVTLLMGLLW. At 217-222 the chain is on the extracellular side; sequence DLLQAS. A helical transmembrane segment spans residues 223–243; sequence AFCGLAVLIVLALFQAWLGKM. Residues 244–298 lie on the Cytoplasmic side of the membrane; sequence MMKYRDQRAGKINERLVITSEMIENIQSVKAYCWEEAMEKMIENLRQTELKLTRK. The helical transmembrane segment at 299-319 threads the bilayer; sequence AAYMRYFNSAAFFFSGFFVVF. Residues 320 to 339 lie on the Extracellular side of the membrane; the sequence is LSVLPYAFLQGIILRKIFTT. Residues 340–358 traverse the membrane as a helical segment; that stretch reads ISFCIVLRMAITRQFPGAV. Residues 359–859 are Cytoplasmic-facing; that stretch reads QTWYDSLGAI…YLRYITVHKS (501 aa). ATP is bound by residues Trp401, Ser435, 459–466, and Gln494; that span reads GSTGAGKT. One can recognise an ABC transporter 1 domain in the interval 424 to 647; the sequence is NGDNKLFFSN…RPDFSSKLMG (224 aa). The S-palmitoyl cysteine moiety is linked to residue Cys525. Ser550 carries the post-translational modification Phosphoserine. The segment at 655-832 is disordered R region; the sequence is SAERRNSILT…EEINEEDLKE (178 aa). Phosphoserine; by PKA is present on residues Ser661 and Ser671. Ser687 bears the Phosphoserine; by PKC mark. Residue Lys689 forms a Glycyl lysine isopeptide (Lys-Gly) (interchain with G-Cter in ubiquitin) linkage. Phosphoserine; by PKA occurs at positions 701 and 713. Position 718 is a phosphothreonine (Thr718). Ser738, Ser769, Ser796, and Ser814 each carry phosphoserine; by PKA. The chain crosses the membrane as a helical span at residues 860–880; sequence LILVLIWCLIIFLAEVAASLV. An ABC transmembrane type-1 2 domain is found at 860 to 1156; sequence LILVLIWCLI…AVNSSIDVDS (297 aa). Residues 881-919 lie on the Extracellular side of the membrane; sequence VLWLLKNNTPQQEMNSTQSGNRSYPVIITNTSFYYIFYI. N-linked (GlcNAc...) asparagine glycosylation is found at Asn895 and Asn901. A discontinuously helical membrane pass occupies residues 920–940; that stretch reads YVGVADTLLALGLFRGLPLVH. Residues 941–991 lie on the Cytoplasmic side of the membrane; that stretch reads TLITVSKILHHKMLRSVLQAPMSTLNALKAGGILNRFSKDIAILDDLLPLT. The helical transmembrane segment at 992 to 1012 threads the bilayer; it reads IFDFIQLLLIVIGAIAVVSVL. The Extracellular segment spans residues 1013-1014; sequence QP. A helical transmembrane segment spans residues 1015 to 1035; that stretch reads YIFLATVPVIAAFIMLRAYFL. The Cytoplasmic segment spans residues 1036–1096; the sequence is HTSQQLKQLE…TANWFLYLST (61 aa). Residues 1097–1117 form a helical membrane-spanning segment; that stretch reads LRWFQMRIEMIFVIFFIAVTF. Residues 1118-1131 are Extracellular-facing; the sequence is ISILTTGEGQGSVG. Residues 1132 to 1152 traverse the membrane as a helical segment; the sequence is IILTLAMNIMSTLQWAVNSSI. At 1153 to 1481 the chain is on the cytoplasmic side; sequence DVDSLMRSVS…TEEEVQETRL (329 aa). The ABC transporter 2 domain maps to 1211 to 1444; the sequence is MIVKDLTAKY…KSLFRQAISS (234 aa). Residues Tyr1220 and 1245–1252 contribute to the ATP site; that span reads GRTGSGKS. Residues 1387–1481 are interaction with GORASP2; that stretch reads RTIKQAFADC…TEEEVQETRL (95 aa). A lipid anchor (S-palmitoyl cysteine) is attached at Cys1396. Phosphoserine occurs at positions 1445 and 1457. A compositionally biased stretch (basic residues) spans 1453–1462; the sequence is HRNSSKHKSR. The disordered stretch occupies residues 1453–1481; sequence HRNSSKHKSRSQITALKEETEEEVQETRL. Acidic residues predominate over residues 1471–1481; it reads ETEEEVQETRL. Positions 1479–1481 match the PDZ-binding motif; that stretch reads TRL.

It belongs to the ABC transporter superfamily. ABCC family. CFTR transporter (TC 3.A.1.202) subfamily. Monomer; does not require oligomerization for channel activity. May form oligomers in the membrane. Interacts with SLC26A3, SLC26A6 and NHERF1. Interacts with SHANK2. Interacts with MYO6. Interacts (via C-terminus) with GOPC (via PDZ domain); this promotes CFTR internalization and thereby decreases channel activity. Interacts with SLC4A7 through NHERF1. Found in a complex with MYO5B and RAB11A. Interacts with ANO1. Interacts with SLC26A8. Interacts with AHCYL1; the interaction increases CFTR activity. Interacts with CSE1L. The core-glycosylated form interacts with GORASP2 (via PDZ GRASP-type 1 domain) in respone to ER stress. Interacts with MARCHF2; the interaction leads to CFTR ubiqtuitination and degradation. Interacts with ADGRG2. Post-translationally, N-glycosylated. In terms of processing, phosphorylated; cAMP treatment promotes phosphorylation and activates the channel. Dephosphorylation decreases the ATPase activity (in vitro). Phosphorylation at PKA sites activates the channel. Phosphorylation at PKC sites enhances the response to phosphorylation by PKA. Phosphorylated by AMPK; this inhibits channel activity. Ubiquitinated, leading to its degradation in the lysosome. Deubiquitination by USP10 in early endosomes enhances its endocytic recycling to the cell membrane. Ubiquitinated by RNF185 during ER stress. Ubiquitinated by MARCHF2.

Its subcellular location is the apical cell membrane. The protein resides in the early endosome membrane. The protein localises to the cell membrane. It localises to the recycling endosome membrane. It is found in the endoplasmic reticulum membrane. Its subcellular location is the nucleus. It carries out the reaction ATP + H2O + closed Cl(-) channel = ADP + phosphate + open Cl(-) channel.. It catalyses the reaction chloride(in) = chloride(out). The enzyme catalyses hydrogencarbonate(in) = hydrogencarbonate(out). The catalysed reaction is ATP + H2O = ADP + phosphate + H(+). Functionally, epithelial ion channel that plays an important role in the regulation of epithelial ion and water transport and fluid homeostasis. Mediates the transport of chloride ions across the cell membrane. Possesses an intrinsic ATPase activity and utilizes ATP to gate its channel; the passive flow of anions through the channel is gated by cycles of ATP binding and hydrolysis by the ATP-binding domains. The ion channel is also permeable to HCO(3)(-); selectivity depends on the extracellular chloride concentration. Exerts its function also by modulating the activity of other ion channels and transporters. Contributes to the regulation of the pH and the ion content of the epithelial fluid layer. Modulates the activity of the epithelial sodium channel (ENaC) complex, in part by regulating the cell surface expression of the ENaC complex. May regulate bicarbonate secretion and salvage in epithelial cells by regulating the transporter SLC4A7. Can inhibit the chloride channel activity of ANO1. Plays a role in the chloride and bicarbonate homeostasis during sperm epididymal maturation and capacitation. In Cavia porcellus (Guinea pig), this protein is Cystic fibrosis transmembrane conductance regulator.